A 433-amino-acid polypeptide reads, in one-letter code: Phosphomethylpyrimidine synthase (433 aa).

Residues asparagine 66, methionine 94, tyrosine 123, histidine 162, serine 184–glycine 186, aspartate 225–arginine 228, and glutamate 264 contribute to the substrate site. Histidine 268 is a binding site for Zn(2+). Tyrosine 291 contacts substrate. Residue histidine 332 participates in Zn(2+) binding. 3 residues coordinate [4Fe-4S] cluster: cysteine 408, cysteine 411, and cysteine 415.

This sequence belongs to the ThiC family. The cofactor is [4Fe-4S] cluster.

The catalysed reaction is 5-amino-1-(5-phospho-beta-D-ribosyl)imidazole + S-adenosyl-L-methionine = 4-amino-2-methyl-5-(phosphooxymethyl)pyrimidine + CO + 5'-deoxyadenosine + formate + L-methionine + 3 H(+). The protein operates within cofactor biosynthesis; thiamine diphosphate biosynthesis. Its function is as follows. Catalyzes the synthesis of the hydroxymethylpyrimidine phosphate (HMP-P) moiety of thiamine from aminoimidazole ribotide (AIR) in a radical S-adenosyl-L-methionine (SAM)-dependent reaction. The sequence is that of Phosphomethylpyrimidine synthase from Saccharolobus islandicus (strain M.14.25 / Kamchatka #1) (Sulfolobus islandicus).